The following is a 950-amino-acid chain: Oxysterol-binding protein-related protein 1 (950 aa).

The segment at 1 to 237 (MNTEAEQQLL…NKVIYKALKR (237 aa)) is interaction with RAB7A. 3 ANK repeats span residues 47-76 (LGWT…EVNV), 80-109 (MGDT…DTTI), and 175-204 (LGNT…DPNL). A PH domain is found at 235 to 334 (LKRYEGPLWK…WLEAIEEHSA (100 aa)). The stretch at 430–463 (NFKLEQEQEKNKILSEALETLATEHHELEQSLVK) forms a coiled coil. The short motif at 469-485 (SILSEDEFYDALSDSES) is the FFAT element. At Ser-499 the chain carries Phosphoserine. Residues 501 to 521 (EEEGEHLGSRKHRMSEEKDCG) show a composition bias toward basic and acidic residues. 3 disordered regions span residues 501–527 (EEEG…DALS), 795–816 (KKNT…LDEM), and 881–913 (MENG…SEED). Positions 877 to 913 (DIRAMENGEIDQASEEKKRLEEKQRAARKNRSKSEED) form a coiled coil. The segment covering 890 to 901 (SEEKKRLEEKQR) has biased composition (basic and acidic residues).

It belongs to the OSBP family. In terms of assembly, interacts (via FFAT motif) with VAPA and VAPB. Interacts with the GTP-bound form of RAB7A. Interacts with OAS1B. Interacts (via FFAT motif) with MOSPD2 (via MSP domain).

Its subcellular location is the late endosome. Functionally, binds phospholipids; exhibits strong binding to phosphatidic acid and weak binding to phosphatidylinositol 3-phosphate. Stabilizes GTP-bound RAB7A on late endosomes/lysosomes and alters functional properties of late endocytic compartments via its interaction with RAB7A. Binds 25-hydroxycholesterol and cholesterol. The polypeptide is Oxysterol-binding protein-related protein 1 (Homo sapiens (Human)).